The following is a 340-amino-acid chain: Protein B17 (340 aa).

It belongs to the orthopoxvirus B17 protein family.

The polypeptide is Protein B17 (Variola virus (isolate Human/India/Ind3/1967) (VARV)).